The chain runs to 684 residues: Glycine--tRNA ligase beta subunit (684 aa).

It belongs to the class-II aminoacyl-tRNA synthetase family. Tetramer of two alpha and two beta subunits.

The protein resides in the cytoplasm. It catalyses the reaction tRNA(Gly) + glycine + ATP = glycyl-tRNA(Gly) + AMP + diphosphate. The polypeptide is Glycine--tRNA ligase beta subunit (Stutzerimonas stutzeri (strain A1501) (Pseudomonas stutzeri)).